The primary structure comprises 190 residues: MQEKFEQSVKNMLEIIGENPQREGLLKTPTRVFKAFEFLNSGYKQDPKQILNDALFESSNNEMVLVRDIEFYSLCEHHLLPFFGRVHVAYIPDKKVVGLSKIPRLVEVFARRLQIQEQLTEQIAEALMEHVGAKGVGVVIEARHMCVEMRGVQKANSTTSTSALRGSFLKSEKTRKEFFTLINSAKQVRF.

The Zn(2+) site is built by cysteine 75, histidine 78, and cysteine 146.

Belongs to the GTP cyclohydrolase I family. As to quaternary structure, homomer.

The enzyme catalyses GTP + H2O = 7,8-dihydroneopterin 3'-triphosphate + formate + H(+). Its pathway is cofactor biosynthesis; 7,8-dihydroneopterin triphosphate biosynthesis; 7,8-dihydroneopterin triphosphate from GTP: step 1/1. In Campylobacter lari (strain RM2100 / D67 / ATCC BAA-1060), this protein is GTP cyclohydrolase 1.